Consider the following 143-residue polypeptide: FAD synthase (143 aa).

ATP is bound by residues 13–14, 18–21, and D96; these read TF and HPGH.

This sequence belongs to the archaeal FAD synthase family. In terms of assembly, homodimer. A divalent metal cation serves as cofactor.

The catalysed reaction is FMN + ATP + H(+) = FAD + diphosphate. It participates in cofactor biosynthesis; FAD biosynthesis; FAD from FMN: step 1/1. Functionally, catalyzes the transfer of the AMP portion of ATP to flavin mononucleotide (FMN) to produce flavin adenine dinucleotide (FAD) coenzyme. The chain is FAD synthase from Methanothrix thermoacetophila (strain DSM 6194 / JCM 14653 / NBRC 101360 / PT) (Methanosaeta thermophila).